The following is a 490-amino-acid chain: Betaine aldehyde dehydrogenase (490 aa).

3 residues coordinate K(+): T26, I27, and D93. 150–152 (GAW) contacts NAD(+). The Charge relay system role is filled by K162. Residue 176-179 (KPSE) coordinates NAD(+). V180 is a K(+) binding site. 230–233 (GVAS) is an NAD(+) binding site. L246 serves as a coordination point for K(+). Catalysis depends on E252, which acts as the Proton acceptor. NAD(+) is bound by residues G254, C286, and E387. The active-site Nucleophile is the C286. C286 carries the post-translational modification Cysteine sulfenic acid (-SOH). K(+)-binding residues include K457 and G460. E464 (charge relay system) is an active-site residue.

It belongs to the aldehyde dehydrogenase family. In terms of assembly, dimer of dimers. It depends on K(+) as a cofactor.

It catalyses the reaction betaine aldehyde + NAD(+) + H2O = glycine betaine + NADH + 2 H(+). It participates in amine and polyamine biosynthesis; betaine biosynthesis via choline pathway; betaine from betaine aldehyde: step 1/1. Its function is as follows. Involved in the biosynthesis of the osmoprotectant glycine betaine. Catalyzes the irreversible oxidation of betaine aldehyde to the corresponding acid. The sequence is that of Betaine aldehyde dehydrogenase from Escherichia coli O139:H28 (strain E24377A / ETEC).